A 268-amino-acid chain; its full sequence is Imidazole glycerol phosphate synthase subunit HisF (268 aa).

Active-site residues include Asp12 and Asp131.

Belongs to the HisA/HisF family. Heterodimer of HisH and HisF.

Its subcellular location is the cytoplasm. The catalysed reaction is 5-[(5-phospho-1-deoxy-D-ribulos-1-ylimino)methylamino]-1-(5-phospho-beta-D-ribosyl)imidazole-4-carboxamide + L-glutamine = D-erythro-1-(imidazol-4-yl)glycerol 3-phosphate + 5-amino-1-(5-phospho-beta-D-ribosyl)imidazole-4-carboxamide + L-glutamate + H(+). The protein operates within amino-acid biosynthesis; L-histidine biosynthesis; L-histidine from 5-phospho-alpha-D-ribose 1-diphosphate: step 5/9. IGPS catalyzes the conversion of PRFAR and glutamine to IGP, AICAR and glutamate. The HisF subunit catalyzes the cyclization activity that produces IGP and AICAR from PRFAR using the ammonia provided by the HisH subunit. In Methanoregula boonei (strain DSM 21154 / JCM 14090 / 6A8), this protein is Imidazole glycerol phosphate synthase subunit HisF.